The chain runs to 193 residues: Peptidyl-tRNA hydrolase (193 aa).

Histidine 17 lines the tRNA pocket. Residue histidine 22 is the Proton acceptor of the active site. TRNA is bound by residues phenylalanine 68, asparagine 70, and asparagine 116.

This sequence belongs to the PTH family. In terms of assembly, monomer.

Its subcellular location is the cytoplasm. The catalysed reaction is an N-acyl-L-alpha-aminoacyl-tRNA + H2O = an N-acyl-L-amino acid + a tRNA + H(+). Its function is as follows. Hydrolyzes ribosome-free peptidyl-tRNAs (with 1 or more amino acids incorporated), which drop off the ribosome during protein synthesis, or as a result of ribosome stalling. Catalyzes the release of premature peptidyl moieties from peptidyl-tRNA molecules trapped in stalled 50S ribosomal subunits, and thus maintains levels of free tRNAs and 50S ribosomes. The polypeptide is Peptidyl-tRNA hydrolase (Xanthomonas euvesicatoria pv. vesicatoria (strain 85-10) (Xanthomonas campestris pv. vesicatoria)).